The chain runs to 425 residues: Protein PTI1 (425 aa).

Phosphoserine is present on Ser-272.

Component of the cleavage and polyadenylation factor (CPF) complex, which is composed of PTI1, SYC1, SSU72, GLC7, MPE1, REF2, PFS2, PTA1, YSH1/BRR5, SWD2, CFT2/YDH1, YTH1, CFT1/YHH1, FIP1 and PAP1. Component of the APT complex, which is a subcomplex of CPF, and is composed of PTI1, SYC1, SSU72, GLC7, REF2, PTA1 and SWD2.

It is found in the nucleus. In terms of biological role, component of the cleavage and polyadenylation factor (CPF) complex, which plays a key role in polyadenylation-dependent pre-mRNA 3'-end formation and cooperates with cleavage factors including the CFIA complex and NAB4/CFIB. Component of the APT complex, which may be involved in polyadenylation-independent transcript 3'-end formation. PTI1 is required for 3'-end formation of snoRNAs. The sequence is that of Protein PTI1 (PTI1) from Saccharomyces cerevisiae (strain ATCC 204508 / S288c) (Baker's yeast).